Consider the following 198-residue polypeptide: tRNA (pseudouridine(54)-N(1))-methyltransferase (198 aa).

S-adenosyl-L-methionine-binding positions include leucine 130, glycine 153, leucine 176 to leucine 181, and cysteine 186.

It belongs to the methyltransferase superfamily. TrmY family. In terms of assembly, homodimer.

It localises to the cytoplasm. It catalyses the reaction pseudouridine(54) in tRNA + S-adenosyl-L-methionine = N(1)-methylpseudouridine(54) in tRNA + S-adenosyl-L-homocysteine + H(+). Its function is as follows. Specifically catalyzes the N1-methylation of pseudouridine at position 54 (Psi54) in tRNAs. The sequence is that of tRNA (pseudouridine(54)-N(1))-methyltransferase from Methanococcus vannielii (strain ATCC 35089 / DSM 1224 / JCM 13029 / OCM 148 / SB).